Reading from the N-terminus, the 206-residue chain is Elongation factor Ts (206 aa).

An involved in Mg(2+) ion dislocation from EF-Tu region spans residues 81–84 (TDFV).

Belongs to the EF-Ts family.

The protein resides in the cytoplasm. Functionally, associates with the EF-Tu.GDP complex and induces the exchange of GDP to GTP. It remains bound to the aminoacyl-tRNA.EF-Tu.GTP complex up to the GTP hydrolysis stage on the ribosome. The protein is Elongation factor Ts of Maridesulfovibrio salexigens (strain ATCC 14822 / DSM 2638 / NCIMB 8403 / VKM B-1763) (Desulfovibrio salexigens).